Reading from the N-terminus, the 436-residue chain is AP-2 complex subunit mu-B (436 aa).

The MHD domain occupies 170-435; sequence RNELFLDVLE…IGRSGIYETR (266 aa). A 1,2-diacyl-sn-glycero-3-phospho-(1D-myo-inositol-3,4,5-trisphosphate) contacts are provided by K342, K346, and K355.

This sequence belongs to the adaptor complexes medium subunit family. As to quaternary structure, adaptor protein complex 2 (AP-2) is a heterotetramer composed of two large adaptins (alpha-type subunit and beta-type subunit), a medium adaptin (mu-type subunit) and a small adaptin (sigma-type subunit).

The protein resides in the cell membrane. It localises to the membrane. It is found in the coated pit. Functionally, component of the adaptor complexes which link clathrin to receptors in coated vesicles. Clathrin-associated protein complexes are believed to interact with the cytoplasmic tails of membrane proteins, leading to their selection and concentration. AP50 is a subunit of the plasma membrane adaptor. The complex binds polyphosphoinositide-containing lipids. The sequence is that of AP-2 complex subunit mu-B (ap2m1b) from Danio rerio (Zebrafish).